A 94-amino-acid polypeptide reads, in one-letter code: Mitochondrial import inner membrane translocase subunit Tim8 A (94 aa).

Residues 47-70 (CWDKCIDRPGNKLDSRTESCLVSC) carry the Twin CX3C motif motif. 2 cysteine pairs are disulfide-bonded: C47-C70 and C51-C66.

This sequence belongs to the small Tim family. In terms of assembly, heterohexamer; composed of 3 copies of TIMM8A and 3 copies of TIMM13, named soluble 70 kDa complex. Associates with the TIM22 complex, whose core is composed of TIMM22.

It is found in the mitochondrion inner membrane. In terms of biological role, mitochondrial intermembrane chaperone that participates in the import and insertion of some multi-pass transmembrane proteins into the mitochondrial inner membrane. Also required for the transfer of beta-barrel precursors from the TOM complex to the sorting and assembly machinery (SAM complex) of the outer membrane. Acts as a chaperone-like protein that protects the hydrophobic precursors from aggregation and guide them through the mitochondrial intermembrane space. The TIMM8-TIMM13 complex mediates the import of some proteins while the predominant TIMM9-TIMM10 70 kDa complex mediates the import of much more proteins. In Xenopus laevis (African clawed frog), this protein is Mitochondrial import inner membrane translocase subunit Tim8 A (timm8a).